Consider the following 62-residue polypeptide: Small ribosomal subunit protein eS27 (62 aa).

Zn(2+) contacts are provided by Cys17, Cys20, Cys36, and Cys39. Residues 17–39 (CPDCENEQTIFDRACTPVDCIVC) form a C4-type zinc finger.

It belongs to the eukaryotic ribosomal protein eS27 family. In terms of assembly, part of the 30S ribosomal subunit. Requires Zn(2+) as cofactor.

This Methanospirillum hungatei JF-1 (strain ATCC 27890 / DSM 864 / NBRC 100397 / JF-1) protein is Small ribosomal subunit protein eS27.